The following is a 353-amino-acid chain: MDDKKAGAGLSAEKQKALAAALSQIEKQFGKGSIMRMGDGEVEKDIQVVSTGSLGLDIALGVGGLPRGRVVEIYGPESSGKTTLTLQVVAEMQKLGGTCAFIDAEHALDVNYASKLGVDVGELLISQPDTGEQALEITDALVRSGSIDLIVIDSVAALVPKAEIEGEMGDSLPGLQARLMSQALRKLTGTIKRTNCLVIFINQIRMKIGVMFGSPETTTGGNALKFYASVRLDIRRIGSIKKGDDVIGNETKVKVVKNKVSPPFREAFFDILYGQGISRQGEIIDLGVDAKIVEKSGAWYSYNGDKIGQGKDNAREYLRENPDIAQEIENKVRAALGVAPMNSVPAAEVVTED.

75–82 (GPESSGKT) is an ATP binding site.

Belongs to the RecA family.

It localises to the cytoplasm. Functionally, can catalyze the hydrolysis of ATP in the presence of single-stranded DNA, the ATP-dependent uptake of single-stranded DNA by duplex DNA, and the ATP-dependent hybridization of homologous single-stranded DNAs. It interacts with LexA causing its activation and leading to its autocatalytic cleavage. The chain is Protein RecA from Cupriavidus pinatubonensis (strain JMP 134 / LMG 1197) (Cupriavidus necator (strain JMP 134)).